A 149-amino-acid polypeptide reads, in one-letter code: Arginine repressor (149 aa).

This sequence belongs to the ArgR family.

Its subcellular location is the cytoplasm. The protein operates within amino-acid biosynthesis; L-arginine biosynthesis [regulation]. Functionally, regulates arginine biosynthesis genes. The sequence is that of Arginine repressor from Bacillus velezensis (strain DSM 23117 / BGSC 10A6 / LMG 26770 / FZB42) (Bacillus amyloliquefaciens subsp. plantarum).